The chain runs to 375 residues: Homoserine O-succinyltransferase (375 aa).

The region spanning 48 to 358 (NAVLVCHALS…DAGHDSFLLD (311 aa)) is the AB hydrolase-1 domain. Serine 154 (nucleophile) is an active-site residue. A substrate-binding site is contributed by arginine 224. Residues aspartate 319 and histidine 352 contribute to the active site. Aspartate 353 contributes to the substrate binding site.

Belongs to the AB hydrolase superfamily. MetX family. Homodimer.

The protein resides in the cytoplasm. It catalyses the reaction L-homoserine + succinyl-CoA = O-succinyl-L-homoserine + CoA. It functions in the pathway amino-acid biosynthesis; L-methionine biosynthesis via de novo pathway; O-succinyl-L-homoserine from L-homoserine: step 1/1. Functionally, transfers a succinyl group from succinyl-CoA to L-homoserine, forming succinyl-L-homoserine. This Aromatoleum aromaticum (strain DSM 19018 / LMG 30748 / EbN1) (Azoarcus sp. (strain EbN1)) protein is Homoserine O-succinyltransferase.